The following is a 236-amino-acid chain: (5-formylfuran-3-yl)methyl phosphate synthase (236 aa).

The active-site Schiff-base intermediate with substrate is K27. The active-site Proton acceptor is the K85.

This sequence belongs to the MfnB family.

It carries out the reaction 2 D-glyceraldehyde 3-phosphate = 4-(hydroxymethyl)-2-furancarboxaldehyde phosphate + phosphate + 2 H2O. It participates in cofactor biosynthesis; methanofuran biosynthesis. In terms of biological role, catalyzes the formation of 4-(hydroxymethyl)-2-furancarboxaldehyde phosphate (4-HFC-P) from two molecules of glyceraldehyde-3-P (GA-3-P). In Methanothermobacter thermautotrophicus (strain ATCC 29096 / DSM 1053 / JCM 10044 / NBRC 100330 / Delta H) (Methanobacterium thermoautotrophicum), this protein is (5-formylfuran-3-yl)methyl phosphate synthase.